The chain runs to 402 residues: Protein rds1 (402 aa).

May have a function in stress-related responses of the cell. This chain is Protein rds1 (rds1), found in Schizosaccharomyces pombe (strain 972 / ATCC 24843) (Fission yeast).